Reading from the N-terminus, the 143-residue chain is Hemoglobin subunit alpha-1 (143 aa).

Ser-2 is subject to N-acetylserine. The region spanning 2–143 is the Globin domain; that stretch reads SLSAKDKATV…LALALCEKYR (142 aa). O2 is bound at residue His-60. Heme b is bound at residue His-89.

The protein belongs to the globin family. As to quaternary structure, hb 1 is a heterotetramer of two alpha-1 and two beta-1 chains. In terms of tissue distribution, red blood cells.

Its function is as follows. Involved in oxygen transport from gills to the various peripheral tissues. The sequence is that of Hemoglobin subunit alpha-1 (hba1) from Boreogadus saida (Polar cod).